A 167-amino-acid polypeptide reads, in one-letter code: MKERLPHEKGFHVSWDQIHRDSRALAWRLDGQGPDNGAWRAVVGITRGGLVPAMIVSRELDIRTVDTISVKSYNWQEQQPPSVIKAPQAELMGDGHGILIVDDLVDSGKTLELVRTLYPRAHFATVYAKPSGRPMVDTYITEVSQDTWIFFPWDMALQYVEPYRGRD.

5-phospho-alpha-D-ribose 1-diphosphate-binding positions include 47–48 (RG), Q79, and 102–110 (DDLVDSGKT). Q79 serves as a coordination point for GMP. D103 is a binding site for Mg(2+). The guanine site is built by D106 and I149. Residues D106 and I149 each contribute to the xanthine site. GMP contacts are provided by residues 106–110 (DSGKT) and 148–149 (WI).

This sequence belongs to the purine/pyrimidine phosphoribosyltransferase family. XGPT subfamily. As to quaternary structure, homotetramer. Mg(2+) is required as a cofactor.

Its subcellular location is the cell inner membrane. The enzyme catalyses GMP + diphosphate = guanine + 5-phospho-alpha-D-ribose 1-diphosphate. It carries out the reaction XMP + diphosphate = xanthine + 5-phospho-alpha-D-ribose 1-diphosphate. The catalysed reaction is IMP + diphosphate = hypoxanthine + 5-phospho-alpha-D-ribose 1-diphosphate. It functions in the pathway purine metabolism; GMP biosynthesis via salvage pathway; GMP from guanine: step 1/1. The protein operates within purine metabolism; XMP biosynthesis via salvage pathway; XMP from xanthine: step 1/1. Functionally, purine salvage pathway enzyme that catalyzes the transfer of the ribosyl-5-phosphate group from 5-phospho-alpha-D-ribose 1-diphosphate (PRPP) to the N9 position of the 6-oxopurines guanine and xanthine to form the corresponding ribonucleotides GMP (guanosine 5'-monophosphate) and XMP (xanthosine 5'-monophosphate), with the release of PPi. To a lesser extent, also acts on hypoxanthine. The protein is Xanthine-guanine phosphoribosyltransferase of Cereibacter sphaeroides (strain ATCC 17025 / ATH 2.4.3) (Rhodobacter sphaeroides).